Here is a 100-residue protein sequence, read N- to C-terminus: DNA-directed RNA polymerase subunit Rpo11 (100 aa).

It belongs to the archaeal Rpo11/eukaryotic RPB11/RPC19 RNA polymerase subunit family. As to quaternary structure, part of the RNA polymerase complex.

Its subcellular location is the cytoplasm. It catalyses the reaction RNA(n) + a ribonucleoside 5'-triphosphate = RNA(n+1) + diphosphate. DNA-dependent RNA polymerase (RNAP) catalyzes the transcription of DNA into RNA using the four ribonucleoside triphosphates as substrates. The polypeptide is DNA-directed RNA polymerase subunit Rpo11 (Picrophilus torridus (strain ATCC 700027 / DSM 9790 / JCM 10055 / NBRC 100828 / KAW 2/3)).